The sequence spans 93 residues: Acylphosphatase (93 aa).

The Acylphosphatase-like domain occupies 5 to 91 (RAHFLVKGFV…RGETTFRIRS (87 aa)). Active-site residues include Arg-20 and Asn-38.

It belongs to the acylphosphatase family.

It catalyses the reaction an acyl phosphate + H2O = a carboxylate + phosphate + H(+). The chain is Acylphosphatase (acyP) from Moorella thermoacetica (strain ATCC 39073 / JCM 9320).